Reading from the N-terminus, the 258-residue chain is UBX domain-containing protein 2A (258 aa).

Over residues 1 to 14 (MKEVDNLDSIKEEW) the composition is skewed to basic and acidic residues. Positions 1 to 30 (MKEVDNLDSIKEEWACETGPPDSQPLNDNQ) are disordered. The interval 1–152 (MKEVDNLDSI…SATPRIVSKA (152 aa)) is required for interaction with CHRNA3. The required for inhibition of CHRNA3 ubiquitination and translocation of CHRNA3 to the plasma membrane resulting in an increase in acetylcholine-gated nicotinic acetylcholine receptor currents stretch occupies residues 1–165 (MKEVDNLDSI…EVDNKSTLSA (165 aa)). Residues 61-125 (QVDVNIKLWK…VEDKKNEVCM (65 aa)) enclose the SEP domain. Residues 168 to 258 (LNNLEPITRI…QKTAEPFRKL (91 aa)) are required for interaction with VCP. The 78-residue stretch at 170-247 (NLEPITRIQI…DLKNAVIIQR (78 aa)) folds into the UBX domain.

Part of a complex composed of STUB1/CHIP, VCP/p97, CHRNA3, and UBXN2A that modulates the ubiquitination and endoplasmic reticulum-associated degradation (ERAD) of CHRNA3. Within the complex UBXN2A acts as a scaffold protein required for the interaction of CHRNA3 with VCP/p97, this interaction also inhibits CHRNA3 ubiquitination by STUB1/CHIP and subsequently ERAD. Interacts (via SEP domain) with CHRNA3 and interacts (via UBX domain) with VCP/P97; these interactions are required for the interaction of CHRNA3 with the STUB1-VCP-UBXN2A complex. Interacts with HSPA9/MOT-2 (via SBD domain); the interaction inhibits HSPA9/MOT-2 interaction with and degradation of p53, thereby promotes p53 translocation to the nucleus. Interacts with RICTOR. Ubiquitinated. In terms of tissue distribution, expressed in the prefrontal cortex (at protein level). Expressed in the habenula and hippocampus (at protein level). Expressed in peripheral ganglia.

It localises to the golgi apparatus. The protein localises to the endoplasmic reticulum. The protein resides in the perikaryon. It is found in the cell projection. Its subcellular location is the dendrite. It localises to the nucleus. The protein localises to the cytoplasm. In terms of biological role, acts to repress the ubiquitination and subsequent endoplasmic reticulum-associated degradation of CHRNA3 by the STUB1-VCP-UBXN2A complex in cortical neurons. Also acts to promote the translocation of CHRNA3 to the plasma membrane and subsequently increases plasma membrane acetylcholine-gated ion-channel activation. Plays a role in the inhibition of STUB1-mediated TP53 degradation, via its interaction with HSPA9 which acts to inhibit TP53 binding to HSPA9. Positively mediates the ubiquitination and proteosomal degradation of RICTOR, may thereby act as a negative regulator of the mTORC2 pathway. The protein is UBX domain-containing protein 2A of Mus musculus (Mouse).